We begin with the raw amino-acid sequence, 171 residues long: Small ribosomal subunit protein uS5 (171 aa).

The region spanning 14–77 (YIEKLVNIRR…DKARKAMKNV (64 aa)) is the S5 DRBM domain.

The protein belongs to the universal ribosomal protein uS5 family. Part of the 30S ribosomal subunit. Contacts proteins S4 and S8.

Functionally, with S4 and S12 plays an important role in translational accuracy. Located at the back of the 30S subunit body where it stabilizes the conformation of the head with respect to the body. The sequence is that of Small ribosomal subunit protein uS5 from Vesicomyosocius okutanii subsp. Calyptogena okutanii (strain HA).